Consider the following 416-residue polypeptide: Prostacyclin receptor (416 aa).

Topologically, residues 1 to 45 (MVASGGRPDGPPSITPESPLIVGGREWQGMAGSCWNITYVQDSVG) are extracellular. Disulfide bonds link cysteine 34–cysteine 194 and cysteine 121–cysteine 199. Asparagine 36 carries N-linked (GlcNAc...) asparagine glycosylation. Residues 46–67 (PATSTLMFVAGVVGNGLALGIL) form a helical membrane-spanning segment. The Cytoplasmic segment spans residues 68 to 80 (GARRRSHPSAFAV). The chain crosses the membrane as a helical span at residues 81–105 (LVTGLAVTDLLGTCFLSPAVFVAYA). The Extracellular segment spans residues 106–123 (RNSSLLGLAHGGTMLCDT). A helical transmembrane segment spans residues 124–144 (FAFAMTFFGLASTLILFAMAV). The Cytoplasmic segment spans residues 145-163 (ERCLALSHPYLYAQLDGPR). A helical membrane pass occupies residues 164 to 187 (CARLALPAIYAFCCLFCSLPLLGL). Topologically, residues 188-215 (GEHQQYCPGSWCFIRMRSPQPGGCAFSL) are extracellular. Residues 216-237 (AYASLMALLVTSIFFCNGSVTL) form a helical membrane-spanning segment. Residues 238–264 (SLCHMYRQQRRHHGSFVPTSRAREDEV) lie on the Cytoplasmic side of the membrane. Residues 265–289 (YHLILLALMTGIMAVCSLPLTIRGF) traverse the membrane as a helical segment. Over 290-302 (TQAIAPDSREMGD) the chain is Extracellular. The chain crosses the membrane as a helical span at residues 303-323 (LHAFRFNAFNPILDPWVFILF). Residues 324–416 (RKAVFQRLKF…TEAVVACSLC (93 aa)) lie on the Cytoplasmic side of the membrane. Position 366 is a phosphoserine (serine 366). Cysteine 413 carries the cysteine methyl ester modification. A lipid anchor (S-farnesyl cysteine) is attached at cysteine 413. A propeptide spans 414–416 (SLC) (removed in mature form).

The protein belongs to the G-protein coupled receptor 1 family. Interacts (non-isoprenylated C-terminus) with PDZK1. Post-translationally, isoprenylation does not influence ligand binding but is required for efficient coupling to the effectors adenylyl cyclase and phospholipase C.

The protein resides in the cell membrane. Its function is as follows. Receptor for prostacyclin (prostaglandin I2 or PGI2). The activity of this receptor is mediated by G(s) proteins which activate adenylate cyclase. The chain is Prostacyclin receptor (Ptgir) from Rattus norvegicus (Rat).